The primary structure comprises 339 residues: Holliday junction branch migration complex subunit RuvB (339 aa).

Residues 2–187 (KDVNEEERII…FGIIEHMQYY (186 aa)) are large ATPase domain (RuvB-L). Residues Leu-26, Arg-27, Gly-68, Lys-71, Thr-72, Thr-73, 134–136 (EDF), Arg-177, Tyr-187, and Arg-224 contribute to the ATP site. Thr-72 lines the Mg(2+) pocket. The tract at residues 188–258 (SVEDLEKIIQ…TTKHSLHLLE (71 aa)) is small ATPAse domain (RuvB-S). A head domain (RuvB-H) region spans residues 261–339 (DEGLDQTDRK…QLGYPPKDEK (79 aa)). Residues Arg-316 and Arg-321 each coordinate DNA.

It belongs to the RuvB family. Homohexamer. Forms an RuvA(8)-RuvB(12)-Holliday junction (HJ) complex. HJ DNA is sandwiched between 2 RuvA tetramers; dsDNA enters through RuvA and exits via RuvB. An RuvB hexamer assembles on each DNA strand where it exits the tetramer. Each RuvB hexamer is contacted by two RuvA subunits (via domain III) on 2 adjacent RuvB subunits; this complex drives branch migration. In the full resolvosome a probable DNA-RuvA(4)-RuvB(12)-RuvC(2) complex forms which resolves the HJ.

The protein localises to the cytoplasm. It carries out the reaction ATP + H2O = ADP + phosphate + H(+). In terms of biological role, the RuvA-RuvB-RuvC complex processes Holliday junction (HJ) DNA during genetic recombination and DNA repair, while the RuvA-RuvB complex plays an important role in the rescue of blocked DNA replication forks via replication fork reversal (RFR). RuvA specifically binds to HJ cruciform DNA, conferring on it an open structure. The RuvB hexamer acts as an ATP-dependent pump, pulling dsDNA into and through the RuvAB complex. RuvB forms 2 homohexamers on either side of HJ DNA bound by 1 or 2 RuvA tetramers; 4 subunits per hexamer contact DNA at a time. Coordinated motions by a converter formed by DNA-disengaged RuvB subunits stimulates ATP hydrolysis and nucleotide exchange. Immobilization of the converter enables RuvB to convert the ATP-contained energy into a lever motion, pulling 2 nucleotides of DNA out of the RuvA tetramer per ATP hydrolyzed, thus driving DNA branch migration. The RuvB motors rotate together with the DNA substrate, which together with the progressing nucleotide cycle form the mechanistic basis for DNA recombination by continuous HJ branch migration. Branch migration allows RuvC to scan DNA until it finds its consensus sequence, where it cleaves and resolves cruciform DNA. This is Holliday junction branch migration complex subunit RuvB from Lactobacillus johnsonii (strain CNCM I-12250 / La1 / NCC 533).